The primary structure comprises 326 residues: Tryptophan--tRNA ligase (326 aa).

ATP-binding positions include 11–13 (QPT) and 19–20 (GN). The 'HIGH' region signature appears at 12–20 (PTGQIHLGN). An L-tryptophan-binding site is contributed by Asp-135. Residues 147–149 (GED), Val-186, and 195–199 (KMSKS) each bind ATP. The 'KMSKS' region motif lies at 195–199 (KMSKS).

The protein belongs to the class-I aminoacyl-tRNA synthetase family. In terms of assembly, homodimer.

Its subcellular location is the cytoplasm. It catalyses the reaction tRNA(Trp) + L-tryptophan + ATP = L-tryptophyl-tRNA(Trp) + AMP + diphosphate + H(+). Catalyzes the attachment of tryptophan to tRNA(Trp). The sequence is that of Tryptophan--tRNA ligase from Helicobacter pylori (strain J99 / ATCC 700824) (Campylobacter pylori J99).